We begin with the raw amino-acid sequence, 350 residues long: Cilia- and flagella-associated protein 36 (350 aa).

A coiled-coil region spans residues S142–M167. 2 disordered regions span residues G171 to A233 and R301 to K337. The span at L177–Q220 shows a compositional bias: polar residues. Residues V280–K350 adopt a coiled-coil conformation.

This sequence belongs to the CFAP36 family.

Its subcellular location is the nucleus. The protein resides in the cytoplasm. It localises to the cell projection. The protein localises to the cilium. It is found in the flagellum. This is Cilia- and flagella-associated protein 36 from Danio rerio (Zebrafish).